Reading from the N-terminus, the 410-residue chain is Arginine deiminase (410 aa).

The active-site Amidino-cysteine intermediate is the Cys-400.

This sequence belongs to the arginine deiminase family.

It is found in the cytoplasm. It carries out the reaction L-arginine + H2O = L-citrulline + NH4(+). Its pathway is amino-acid degradation; L-arginine degradation via ADI pathway; carbamoyl phosphate from L-arginine: step 1/2. This chain is Arginine deiminase, found in Bacillus thuringiensis subsp. konkukian (strain 97-27).